Reading from the N-terminus, the 162-residue chain is Catabolic 3-dehydroquinase (162 aa).

Tyr24 acts as the Proton acceptor in catalysis. Positions 88, 94, and 101 each coordinate substrate. The active-site Proton donor is His114. Substrate is bound by residues 115–116 (VS) and Arg125.

Belongs to the type-II 3-dehydroquinase family. As to quaternary structure, homododecamer. Adopts a ring-like structure, composed of an arrangement of two hexameric rings stacked on top of one another.

The catalysed reaction is 3-dehydroquinate = 3-dehydroshikimate + H2O. Its pathway is aromatic compound metabolism; 3,4-dihydroxybenzoate biosynthesis; 3,4-dihydroxybenzoate from 3-dehydroquinate: step 1/2. Is involved in the catabolism of quinate. Allows the utilization of quinate as carbon source via the beta-ketoadipate pathway. This is Catabolic 3-dehydroquinase from Podospora anserina (strain S / ATCC MYA-4624 / DSM 980 / FGSC 10383) (Pleurage anserina).